A 402-amino-acid chain; its full sequence is Deoxyguanosinetriphosphate triphosphohydrolase-like protein (402 aa).

The interval 20–39 (PAFSRGRLVPEPESPTRTPF) is disordered. The region spanning 73–217 (RLTHTIEVAQ…AAIADDIAYN (145 aa)) is the HD domain.

Belongs to the dGTPase family. Type 2 subfamily.

The protein is Deoxyguanosinetriphosphate triphosphohydrolase-like protein of Brucella ovis (strain ATCC 25840 / 63/290 / NCTC 10512).